Consider the following 455-residue polypeptide: RQC trigger complex subunit RQT4 homolog (455 aa).

Disordered regions lie at residues 64–98 (STHS…SHPS) and 118–148 (PASR…GVMT). Polar residues-rich tracts occupy residues 65-98 (THSG…SHPS) and 119-130 (ASRNKSQSNNIS). The residue at position 70 (Ser-70) is a Phosphoserine. Residue Ser-380 is modified to Phosphoserine.

In terms of assembly, component of the RQT (ribosome quality control trigger) complex.

Its subcellular location is the cytoplasm. It localises to the cytosol. Functionally, probably functions as part of the RQC trigger (RQT) complex that activates the ribosome quality control (RQC) pathway, a pathway that degrades nascent peptide chains during problematic translation. This chain is RQC trigger complex subunit RQT4 homolog, found in Schizosaccharomyces pombe (strain 972 / ATCC 24843) (Fission yeast).